We begin with the raw amino-acid sequence, 85 residues long: U4-theraphotoxin-Hhn1w (85 aa).

The first 22 residues, 1-22 (MKVTLIAILTCAAVLALHTTAA), serve as a signal peptide directing secretion. Residues 23-48 (EELEAESQLMEVGMPDTELAAVDEER) constitute a propeptide that is removed on maturation. 3 disulfides stabilise this stretch: cysteine 52–cysteine 66, cysteine 56–cysteine 77, and cysteine 71–cysteine 82.

It belongs to the neurotoxin 12 (Hwtx-2) family. 02 (Hwtx-2) subfamily. In terms of tissue distribution, expressed by the venom gland.

The protein resides in the secreted. In terms of biological role, postsynaptic neurotoxin. The chain is U4-theraphotoxin-Hhn1w from Cyriopagopus hainanus (Chinese bird spider).